Consider the following 208-residue polypeptide: Cytochrome c biogenesis ATP-binding export protein CcmA (208 aa).

An ABC transporter domain is found at 3 to 206; it reads LSGKDLAAHR…LEKFVPSQER (204 aa). Residue 35-42 participates in ATP binding; the sequence is GPNGIGKS.

This sequence belongs to the ABC transporter superfamily. CcmA exporter (TC 3.A.1.107) family. In terms of assembly, the complex is composed of two ATP-binding proteins (CcmA) and two transmembrane proteins (CcmB).

Its subcellular location is the cell inner membrane. The enzyme catalyses heme b(in) + ATP + H2O = heme b(out) + ADP + phosphate + H(+). In terms of biological role, part of the ABC transporter complex CcmAB involved in the biogenesis of c-type cytochromes; once thought to export heme, this seems not to be the case, but its exact role is uncertain. Responsible for energy coupling to the transport system. The protein is Cytochrome c biogenesis ATP-binding export protein CcmA of Bartonella quintana (strain Toulouse) (Rochalimaea quintana).